A 160-amino-acid chain; its full sequence is 6,7-dimethyl-8-ribityllumazine synthase (160 aa).

5-amino-6-(D-ribitylamino)uracil-binding positions include tryptophan 31, 65-67, and 89-91; these read SFE and CVV. 94 to 95 provides a ligand contact to (2S)-2-hydroxy-3-oxobutyl phosphate; sequence DT. Residue histidine 97 is the Proton donor of the active site. A 5-amino-6-(D-ribitylamino)uracil-binding site is contributed by phenylalanine 122. Residue arginine 136 coordinates (2S)-2-hydroxy-3-oxobutyl phosphate.

The protein belongs to the DMRL synthase family.

It carries out the reaction (2S)-2-hydroxy-3-oxobutyl phosphate + 5-amino-6-(D-ribitylamino)uracil = 6,7-dimethyl-8-(1-D-ribityl)lumazine + phosphate + 2 H2O + H(+). Its pathway is cofactor biosynthesis; riboflavin biosynthesis; riboflavin from 2-hydroxy-3-oxobutyl phosphate and 5-amino-6-(D-ribitylamino)uracil: step 1/2. In terms of biological role, catalyzes the formation of 6,7-dimethyl-8-ribityllumazine by condensation of 5-amino-6-(D-ribitylamino)uracil with 3,4-dihydroxy-2-butanone 4-phosphate. This is the penultimate step in the biosynthesis of riboflavin. The sequence is that of 6,7-dimethyl-8-ribityllumazine synthase from Parabacteroides distasonis (strain ATCC 8503 / DSM 20701 / CIP 104284 / JCM 5825 / NCTC 11152).